The primary structure comprises 740 residues: Dipeptidyl peptidase family member 6 (740 aa).

Residue methionine 1 is a topological domain, cytoplasmic. A helical; Signal-anchor for type II membrane protein membrane pass occupies residues 2 to 22 (LFLPILILNLLIITHAIDIIP). The Lumenal portion of the chain corresponds to 23–740 (REVLFQDPKY…VMNRIFPVQG (718 aa)). 3 N-linked (GlcNAc...) asparagine glycosylation sites follow: asparagine 108, asparagine 308, and asparagine 506. Residues serine 516, aspartate 604, and histidine 636 each act as charge relay system in the active site. Cysteine 535 and cysteine 658 are disulfide-bonded. An N-linked (GlcNAc...) asparagine glycan is attached at asparagine 672.

Belongs to the peptidase S9B family. DPPIV subfamily.

It is found in the cell membrane. In terms of biological role, removes N-terminal dipeptides sequentially from polypeptides. Essential for control of distal tip cell migration. In Caenorhabditis elegans, this protein is Dipeptidyl peptidase family member 6 (dpf-6).